A 519-amino-acid polypeptide reads, in one-letter code: MLRSLHSAATLSNKRFYSLISHSNRKNIIKKLLRHPSFDPIRHHLPEDITTIDPYSLSQNVIESLNKLEVPKKDAAMVHNMMIENLSDLDYGVATIHSNNLRDLDLKPSLPAIKQIIRNNPGRVQSSWELFTQYKASMENVPDELMEVVLEKIIKFDKAEKVDGKKSLTYQDLVRCLYLINHFSSNYNLPSELVEPILIYIVDNGIPNVLGSVLKYKIPLSFFDKYVSEMTQYQICELYDFYSLDNIVADPLVLHKCLTVLGENEKIQQTEEEKEIISKLEEEIDIVKSQCHDNWSLEFPNWSVRKTATSFEELFLEIQKRNIDKKDFELAHKLLRLIGAFKGKVSLFFKLYDEYLLKFKNNEDDLMFEAFLTLCCQGYKSSNEKMLQYAEAFIKEDFDSKLESKIQSVLIVANAKANIDLSLKIYNSNISTAKREKDKYTDLAESDVLTESLILAFLSRDDADFARVIFDGALGEKLISGPTAAKKIKNLLAQYGEALETKTSKQVMQTKIEHYMESI.

The N-terminal 35 residues, 1–35, are a transit peptide targeting the mitochondrion; that stretch reads MLRSLHSAATLSNKRFYSLISHSNRKNIIKKLLRH.

As to quaternary structure, associates with the mitochondrial ribosome.

It is found in the mitochondrion. Its function is as follows. Component of MIOREX complexes, large expressome-like assemblies of ribosomes with factors involved in all the steps of post-transcriptional gene expression. This chain is MIOREX complex component 12, found in Saccharomyces cerevisiae (strain ATCC 204508 / S288c) (Baker's yeast).